Reading from the N-terminus, the 235-residue chain is Phosphoribosylaminoimidazole-succinocarboxamide synthase (235 aa).

The protein belongs to the SAICAR synthetase family.

The catalysed reaction is 5-amino-1-(5-phospho-D-ribosyl)imidazole-4-carboxylate + L-aspartate + ATP = (2S)-2-[5-amino-1-(5-phospho-beta-D-ribosyl)imidazole-4-carboxamido]succinate + ADP + phosphate + 2 H(+). It participates in purine metabolism; IMP biosynthesis via de novo pathway; 5-amino-1-(5-phospho-D-ribosyl)imidazole-4-carboxamide from 5-amino-1-(5-phospho-D-ribosyl)imidazole-4-carboxylate: step 1/2. This Clostridium novyi (strain NT) protein is Phosphoribosylaminoimidazole-succinocarboxamide synthase.